The sequence spans 391 residues: Formate-dependent phosphoribosylglycinamide formyltransferase (391 aa).

Residues 20-21 and glutamate 80 each bind N(1)-(5-phospho-beta-D-ribosyl)glycinamide; that span reads EL. Residues arginine 112, lysine 153, 158–163, 193–196, and glutamate 201 each bind ATP; these read SSGKGQ and EGFV. Residues 117–306 form the ATP-grasp domain; the sequence is RLAAETLGLP…EFALHVRAIL (190 aa). Residues glutamate 265 and glutamate 277 each contribute to the Mg(2+) site. N(1)-(5-phospho-beta-D-ribosyl)glycinamide contacts are provided by residues aspartate 284, lysine 354, and 361 to 362; that span reads RR.

This sequence belongs to the PurK/PurT family. As to quaternary structure, homodimer.

The catalysed reaction is N(1)-(5-phospho-beta-D-ribosyl)glycinamide + formate + ATP = N(2)-formyl-N(1)-(5-phospho-beta-D-ribosyl)glycinamide + ADP + phosphate + H(+). The protein operates within purine metabolism; IMP biosynthesis via de novo pathway; N(2)-formyl-N(1)-(5-phospho-D-ribosyl)glycinamide from N(1)-(5-phospho-D-ribosyl)glycinamide (formate route): step 1/1. In terms of biological role, involved in the de novo purine biosynthesis. Catalyzes the transfer of formate to 5-phospho-ribosyl-glycinamide (GAR), producing 5-phospho-ribosyl-N-formylglycinamide (FGAR). Formate is provided by PurU via hydrolysis of 10-formyl-tetrahydrofolate. This chain is Formate-dependent phosphoribosylglycinamide formyltransferase, found in Shewanella putrefaciens (strain CN-32 / ATCC BAA-453).